The primary structure comprises 142 residues: Large ribosomal subunit protein uL13 (142 aa).

Belongs to the universal ribosomal protein uL13 family. Part of the 50S ribosomal subunit.

In terms of biological role, this protein is one of the early assembly proteins of the 50S ribosomal subunit, although it is not seen to bind rRNA by itself. It is important during the early stages of 50S assembly. The protein is Large ribosomal subunit protein uL13 of Pseudoalteromonas translucida (strain TAC 125).